Reading from the N-terminus, the 276-residue chain is Malectin-A (276 aa).

The signal sequence occupies residues 1–26; sequence MLSIRTVLGPLATILLTVLGPFGAHG. Residues 27–253 lie on the Lumenal side of the membrane; that stretch reads SGLADKVIWA…TPNPYASDNS (227 aa). Tyrosine 67, tyrosine 89, tyrosine 116, phenylalanine 117, and aspartate 186 together coordinate a carbohydrate. A disordered region spans residues 204 to 247; sequence PMLQPHPGLEKKEEEEEEEEEEGSTSKKQINKNRVQSGPRTPNP. Residues 216–226 show a composition bias toward acidic residues; sequence EEEEEEEEEEG. The span at 229 to 247 shows a compositional bias: polar residues; that stretch reads SKKQINKNRVQSGPRTPNP. Asparagine 252 is a glycosylation site (N-linked (GlcNAc...) asparagine). Residues 254-274 traverse the membrane as a helical segment; the sequence is SLMFPILVAFGVFIPTLFCLC. At 275–276 the chain is on the cytoplasmic side; that stretch reads RL.

The protein belongs to the malectin family. In terms of tissue distribution, widely expressed throughout development including the anterior neuroectoderm and neural crest at stages 18 and 20, and the retina, hatching gland, otic vesicle, epibranchial placodes, pronephros and tail tip of later states. At stage 41, expressed in the liver, pancreas, branchial arches and proctodeum. Expressed broadly in adults in fat, intestine, gall bladder, eye, muscle, kidney, stomach, liver, heart, pancreas and lung.

Its subcellular location is the endoplasmic reticulum membrane. Its function is as follows. Carbohydrate-binding protein with a strong ligand preference for Glc2-N-glycan. May play a role in the early steps of protein N-glycosylation. Can bind di- or higher oligomers but not monomers of glucose, including maltose, maltotriose, maltotetraose, maltoheptaose, nigerose, kojibose, cellobiose and isomaltose, although based on their subcellular locations, these are unlikely to all be physiological ligands. The protein is Malectin-A of Xenopus laevis (African clawed frog).